Consider the following 186-residue polypeptide: Secreted chorismate mutase (186 aa).

Positions 1–30 (MQPTHTLTRLTVIGKLIIASSFFLSLAVQA) are cleaved as a signal peptide. The 77-residue stretch at 31–107 (QQCGQTAPLI…AAKAIQYRYR (77 aa)) folds into the Chorismate mutase domain. Cysteines 33 and 148 form a disulfide. Residues Arg-43, Lys-54, Asp-63, 99 to 103 (AKAIQ), and Arg-127 contribute to the substrate site.

Homodimer.

It localises to the periplasm. The catalysed reaction is chorismate = prephenate. Its pathway is metabolic intermediate biosynthesis; prephenate biosynthesis; prephenate from chorismate: step 1/1. Catalyzes the Claisen rearrangement of chorismate to prephenate. May play some role in the pathogenicity. The protein is Secreted chorismate mutase (pheA2) of Yersinia pestis.